A 286-amino-acid polypeptide reads, in one-letter code: 4-diphosphocytidyl-2-C-methyl-D-erythritol kinase (286 aa).

The active site involves lysine 11. 94–104 contacts ATP; sequence PMGGGIGGGSS. Aspartate 136 is an active-site residue.

The protein belongs to the GHMP kinase family. IspE subfamily.

It catalyses the reaction 4-CDP-2-C-methyl-D-erythritol + ATP = 4-CDP-2-C-methyl-D-erythritol 2-phosphate + ADP + H(+). It participates in isoprenoid biosynthesis; isopentenyl diphosphate biosynthesis via DXP pathway; isopentenyl diphosphate from 1-deoxy-D-xylulose 5-phosphate: step 3/6. Functionally, catalyzes the phosphorylation of the position 2 hydroxy group of 4-diphosphocytidyl-2C-methyl-D-erythritol. The polypeptide is 4-diphosphocytidyl-2-C-methyl-D-erythritol kinase (Pseudomonas entomophila (strain L48)).